The primary structure comprises 119 residues: Large ribosomal subunit protein bL20 (119 aa).

The protein belongs to the bacterial ribosomal protein bL20 family.

In terms of biological role, binds directly to 23S ribosomal RNA and is necessary for the in vitro assembly process of the 50S ribosomal subunit. It is not involved in the protein synthesizing functions of that subunit. In Bradyrhizobium diazoefficiens (strain JCM 10833 / BCRC 13528 / IAM 13628 / NBRC 14792 / USDA 110), this protein is Large ribosomal subunit protein bL20.